The following is a 439-amino-acid chain: Arginine biosynthesis bifunctional protein ArgJ, mitochondrial (439 aa).

Substrate-binding residues include T175, K201, T212, E301, N434, and S439. The Nucleophile role is filled by T212.

It belongs to the ArgJ family. As to quaternary structure, heterodimer of an alpha and a beta chain. In terms of processing, the alpha and beta chains are autoproteolytically processed from a single precursor protein within the mitochondrion.

The protein resides in the mitochondrion matrix. It catalyses the reaction N(2)-acetyl-L-ornithine + L-glutamate = N-acetyl-L-glutamate + L-ornithine. The enzyme catalyses L-glutamate + acetyl-CoA = N-acetyl-L-glutamate + CoA + H(+). Its pathway is amino-acid biosynthesis; L-arginine biosynthesis; L-ornithine and N-acetyl-L-glutamate from L-glutamate and N(2)-acetyl-L-ornithine (cyclic): step 1/1. It functions in the pathway amino-acid biosynthesis; L-arginine biosynthesis; N(2)-acetyl-L-ornithine from L-glutamate: step 1/4. In terms of biological role, catalyzes two activities which are involved in the cyclic version of arginine biosynthesis: the synthesis of acetylglutamate from glutamate and acetyl-CoA, and of ornithine by transacetylation between acetylornithine and glutamate. The sequence is that of Arginine biosynthesis bifunctional protein ArgJ, mitochondrial (ECM42) from Candida albicans (strain SC5314 / ATCC MYA-2876) (Yeast).